A 662-amino-acid chain; its full sequence is Primary amine oxidase 2 (662 aa).

The signal sequence occupies residues M1–S22. N154 carries an N-linked (GlcNAc...) asparagine glycan. F321 to Y332 contributes to the substrate binding site. D323 serves as the catalytic Proton acceptor. An intrachain disulfide couples C342 to C368. Position 405 to 410 (V405 to Y410) interacts with substrate. Y408 functions as the Schiff-base intermediate with substrate; via topaquinone in the catalytic mechanism. Y408 bears the 2',4',5'-topaquinone mark. The Cu cation site is built by H464 and H466. Mn(2+) contacts are provided by D473 and D475. N568 is a glycosylation site (N-linked (GlcNAc...) asparagine). Mn(2+) contacts are provided by D602 and I603. H613 contacts Cu cation.

This sequence belongs to the copper/topaquinone oxidase family. As to quaternary structure, homodimer. Requires Cu cation as cofactor. The cofactor is Mn(2+). L-topaquinone is required as a cofactor. In terms of processing, topaquinone (TPQ) is generated by copper-dependent autoxidation of a specific tyrosyl residue.

The enzyme catalyses a primary methyl amine + O2 + H2O = an aldehyde + H2O2 + NH4(+). This Arabidopsis thaliana (Mouse-ear cress) protein is Primary amine oxidase 2.